A 238-amino-acid polypeptide reads, in one-letter code: UPF0173 metal-dependent hydrolase Helmi_16730 (238 aa).

The protein belongs to the UPF0173 family.

The sequence is that of UPF0173 metal-dependent hydrolase Helmi_16730 from Heliobacterium modesticaldum (strain ATCC 51547 / Ice1).